A 117-amino-acid chain; its full sequence is Putative hydrolase fragment YghX (117 aa).

The disordered stretch occupies residues D91 to N117.

This Escherichia coli (strain K12) protein is Putative hydrolase fragment YghX (yghX).